The following is a 538-amino-acid chain: Reticuline oxidase (538 aa).

A signal peptide spans 1 to 23; the sequence is MENKTPIFFSLSIFLSLLNCALG. Cys30 and Cys89 are oxidised to a cystine. The N-linked (GlcNAc...) asparagine glycan is linked to Asn38. The FAD-binding PCMH-type domain occupies 67–241; it reads LISKPSAIIL…YAWKIKLLPV (175 aa). The segment at residues 104 to 166 is a cross-link (6-(S-cysteinyl)-8alpha-(pros-histidyl)-FAD (His-Cys)); it reads HSYEGLSYTS…SKLGFTAGWC (63 aa). N-linked (GlcNAc...) asparagine glycosylation is found at Asn423 and Asn471.

This sequence belongs to the oxygen-dependent FAD-linked oxidoreductase family. FAD serves as cofactor. Requires a metal cation as cofactor. In terms of processing, the FAD cofactor is bound via a bicovalent 6-S-cysteinyl, 8alpha-N1-histidyl FAD linkage.

The protein resides in the cytoplasmic vesicle. It carries out the reaction (S)-reticuline + O2 = (S)-scoulerine + H2O2 + H(+). Its pathway is alkaloid biosynthesis; (S)-scoulerine biosynthesis; (S)-scoulerine from (S)-reticuline: step 1/1. In terms of biological role, essential to the formation of benzophenanthridine alkaloids in the response of plants to pathogenic attack. Catalyzes the stereospecific conversion of the N-methyl moiety of (S)-reticuline into the berberine bridge carbon of (S)-scoulerine. The polypeptide is Reticuline oxidase (BBE1) (Eschscholzia californica (California poppy)).